The sequence spans 185 residues: Large ribosomal subunit protein uL5 (185 aa).

The protein belongs to the universal ribosomal protein uL5 family. In terms of assembly, part of the 50S ribosomal subunit; part of the 5S rRNA/L5/L18/L25 subcomplex. Contacts the 5S rRNA and the P site tRNA. Forms a bridge to the 30S subunit in the 70S ribosome.

In terms of biological role, this is one of the proteins that bind and probably mediate the attachment of the 5S RNA into the large ribosomal subunit, where it forms part of the central protuberance. In the 70S ribosome it contacts protein S13 of the 30S subunit (bridge B1b), connecting the 2 subunits; this bridge is implicated in subunit movement. Contacts the P site tRNA; the 5S rRNA and some of its associated proteins might help stabilize positioning of ribosome-bound tRNAs. This Caulobacter vibrioides (strain NA1000 / CB15N) (Caulobacter crescentus) protein is Large ribosomal subunit protein uL5.